We begin with the raw amino-acid sequence, 401 residues long: CCA-adding enzyme (401 aa).

ATP-binding residues include Gly32 and Arg35. CTP-binding residues include Gly32 and Arg35. Residues Asp45 and Asp47 each coordinate Mg(2+). Residues Arg116, Asp159, Arg162, Arg165, and Arg168 each contribute to the ATP site. Residues Arg116, Asp159, Arg162, Arg165, and Arg168 each contribute to the CTP site.

The protein belongs to the tRNA nucleotidyltransferase/poly(A) polymerase family. Bacterial CCA-adding enzyme type 3 subfamily. Homodimer. Requires Mg(2+) as cofactor.

The enzyme catalyses a tRNA precursor + 2 CTP + ATP = a tRNA with a 3' CCA end + 3 diphosphate. It catalyses the reaction a tRNA with a 3' CCA end + 2 CTP + ATP = a tRNA with a 3' CCACCA end + 3 diphosphate. Catalyzes the addition and repair of the essential 3'-terminal CCA sequence in tRNAs without using a nucleic acid template. Adds these three nucleotides in the order of C, C, and A to the tRNA nucleotide-73, using CTP and ATP as substrates and producing inorganic pyrophosphate. tRNA 3'-terminal CCA addition is required both for tRNA processing and repair. Also involved in tRNA surveillance by mediating tandem CCA addition to generate a CCACCA at the 3' terminus of unstable tRNAs. While stable tRNAs receive only 3'-terminal CCA, unstable tRNAs are marked with CCACCA and rapidly degraded. In Leuconostoc mesenteroides subsp. mesenteroides (strain ATCC 8293 / DSM 20343 / BCRC 11652 / CCM 1803 / JCM 6124 / NCDO 523 / NBRC 100496 / NCIMB 8023 / NCTC 12954 / NRRL B-1118 / 37Y), this protein is CCA-adding enzyme.